We begin with the raw amino-acid sequence, 421 residues long: UDP-N-acetylglucosamine 1-carboxyvinyltransferase (421 aa).

22–23 is a binding site for phosphoenolpyruvate; that stretch reads KN. Position 92 (arginine 92) interacts with UDP-N-acetyl-alpha-D-glucosamine. Cysteine 116 (proton donor) is an active-site residue. Cysteine 116 carries the post-translational modification 2-(S-cysteinyl)pyruvic acid O-phosphothioketal. Positions 306 and 328 each coordinate UDP-N-acetyl-alpha-D-glucosamine.

Belongs to the EPSP synthase family. MurA subfamily.

It localises to the cytoplasm. It carries out the reaction phosphoenolpyruvate + UDP-N-acetyl-alpha-D-glucosamine = UDP-N-acetyl-3-O-(1-carboxyvinyl)-alpha-D-glucosamine + phosphate. It participates in cell wall biogenesis; peptidoglycan biosynthesis. Cell wall formation. Adds enolpyruvyl to UDP-N-acetylglucosamine. In Thermotoga maritima (strain ATCC 43589 / DSM 3109 / JCM 10099 / NBRC 100826 / MSB8), this protein is UDP-N-acetylglucosamine 1-carboxyvinyltransferase.